We begin with the raw amino-acid sequence, 1036 residues long: Zinc finger protein 532 (1036 aa).

Disordered stretches follow at residues 26–92 (PKAA…LHNG), 106–206 (GAKS…EAES), 220–265 (RKAE…PSSK), and 281–362 (AASD…KVRI). A compositionally biased stretch (basic and acidic residues) spans 32–52 (SGHDDHESHIKQNAHVDDDSH). A phosphoserine mark is found at serine 130, serine 133, and serine 134. Residues 136–151 (EEFEDDEKIEVDDPPD) are compositionally biased toward acidic residues. The residue at position 175 (lysine 175) is an N6-acetyllysine. Over residues 182 to 193 (ENSSKTGVSTSG) the composition is skewed to polar residues. 2 stretches are compositionally biased toward basic and acidic residues: residues 194–205 (HTDKNKVKREAE) and 220–249 (RKAEDKLKENSEKMLESRVLDGKPSSEKSD). Over residues 253-265 (AAAASSKTKPSSK) the composition is skewed to low complexity. The span at 302–314 (EVNDSPKAADKSP) shows a compositional bias: basic and acidic residues. Residues serine 306 and serine 313 each carry the phosphoserine modification. Residues 336–353 (SVSSENSSKGSPSSPVGS) are compositionally biased toward low complexity. Position 433 is a phosphoserine (serine 433). Residues lysine 458 and lysine 515 each participate in a glycyl lysine isopeptide (Lys-Gly) (interchain with G-Cter in SUMO2) cross-link. Residues 615-634 (YKCLECGDAFALEKSLSQHY) form a C2H2-type 1; degenerate zinc finger. The segment at 751–775 (LKCLECNEVFQDEPSLATHFQHAAD) adopts a C2H2-type 2; degenerate zinc-finger fold. The C2H2-type 3 zinc finger occupies 784–807 (HPCRQCDKSFSSSHSLCRHNRIKH). The C2H2-type 4; degenerate zinc-finger motif lies at 814-840 (YACSHCPDSRRTFTKRLMLERHIQLMH). Positions 847–877 (VKELSDDAGDVTNDEEEEAEIKEDAKVPSPK) are disordered. Acidic residues predominate over residues 852-867 (DDAGDVTNDEEEEAEI). Over residues 868 to 877 (KEDAKVPSPK) the composition is skewed to basic and acidic residues. At serine 875 the chain carries Phosphoserine. Residues lysine 879 and lysine 902 each participate in a glycyl lysine isopeptide (Lys-Gly) (interchain with G-Cter in SUMO2) cross-link. 2 C2H2-type zinc fingers span residues 938–961 (HQCRECGLCYTSHGSLARHLFIVH) and 999–1021 (RKCKVCAKTFETEAALNTHMRTH). Positions 966-1000 (PQPVSKQNGAGEDSQQENKPSPEDEAAEGAASDRK) are disordered.

Belongs to the krueppel C2H2-type zinc-finger protein family.

Its subcellular location is the nucleus. May be involved in transcriptional regulation. The sequence is that of Zinc finger protein 532 (Znf532) from Mus musculus (Mouse).